A 155-amino-acid chain; its full sequence is S-ribosylhomocysteine lyase (155 aa).

Fe cation is bound by residues H53, H57, and C121.

It belongs to the LuxS family. As to quaternary structure, homodimer. The cofactor is Fe cation.

The catalysed reaction is S-(5-deoxy-D-ribos-5-yl)-L-homocysteine = (S)-4,5-dihydroxypentane-2,3-dione + L-homocysteine. Functionally, involved in the synthesis of autoinducer 2 (AI-2) which is secreted by bacteria and is used to communicate both the cell density and the metabolic potential of the environment. The regulation of gene expression in response to changes in cell density is called quorum sensing. Catalyzes the transformation of S-ribosylhomocysteine (RHC) to homocysteine (HC) and 4,5-dihydroxy-2,3-pentadione (DPD). In Thermus thermophilus (strain ATCC BAA-163 / DSM 7039 / HB27), this protein is S-ribosylhomocysteine lyase.